An 868-amino-acid polypeptide reads, in one-letter code: Translation initiation factor IF-2 (868 aa).

A disordered region spans residues 201 to 269 (KEEVKPEKVS…GTEKSDKYRE (69 aa)). A compositionally biased stretch (basic residues) spans 249-260 (RGGRSKFKKKKG). Positions 368–537 (GRAPVVTIMG…LLQSEVLELK (170 aa)) constitute a tr-type G domain. The segment at 377–384 (GHVDHGKT) is G1. Residue 377–384 (GHVDHGKT) coordinates GTP. The tract at residues 402 to 406 (GITQH) is G2. A G3 region spans residues 423 to 426 (DTPG). GTP contacts are provided by residues 423 to 427 (DTPGH) and 477 to 480 (NKMD). A G4 region spans residues 477–480 (NKMD). Positions 513–515 (SAK) are G5.

Belongs to the TRAFAC class translation factor GTPase superfamily. Classic translation factor GTPase family. IF-2 subfamily.

The protein localises to the cytoplasm. One of the essential components for the initiation of protein synthesis. Protects formylmethionyl-tRNA from spontaneous hydrolysis and promotes its binding to the 30S ribosomal subunits. Also involved in the hydrolysis of GTP during the formation of the 70S ribosomal complex. This is Translation initiation factor IF-2 from Legionella pneumophila (strain Corby).